Consider the following 203-residue polypeptide: E3 ubiquitin-protein ligase rnf152-A (203 aa).

The RING-type; degenerate zinc finger occupies 12-55 (CQICFNYYSPRRRPKLLDCKRTCCSVCLQQMRACQKDLRCPWCR). A helical membrane pass occupies residues 167 to 187 (SGICTVILVACVLVFLLGIVL).

It belongs to the RNF152 family.

It is found in the lysosome membrane. It catalyses the reaction S-ubiquitinyl-[E2 ubiquitin-conjugating enzyme]-L-cysteine + [acceptor protein]-L-lysine = [E2 ubiquitin-conjugating enzyme]-L-cysteine + N(6)-ubiquitinyl-[acceptor protein]-L-lysine.. It functions in the pathway protein modification; protein ubiquitination. Its function is as follows. E3 ubiquitin-protein ligase that acts as a negative regulator of mTORC1 signaling by mediating ubiquitination of RagA/RRAGA and RHEB. Catalyzes 'Lys-63'-linked polyubiquitination of RagA/RRAGA in response to amino acid starvation, thereby regulating mTORC1 signaling. Also mediates monoubiquitination of RHEB, promoting its association with the TSC-TBC complex and subsequent inhibition. Also mediates 'Lys-48'-linked polyubiquitination of target proteins and their subsequent targeting to the proteasome for degradation. The sequence is that of E3 ubiquitin-protein ligase rnf152-A from Xenopus laevis (African clawed frog).